A 136-amino-acid polypeptide reads, in one-letter code: Urease subunit beta (136 aa).

The tract at residues 113–136 (NDEYAGVFGDNGAENVNKKGGKRS) is disordered.

It belongs to the urease beta subunit family. Heterotrimer of UreA (gamma), UreB (beta) and UreC (alpha) subunits. Three heterotrimers associate to form the active enzyme.

It is found in the cytoplasm. The enzyme catalyses urea + 2 H2O + H(+) = hydrogencarbonate + 2 NH4(+). Its pathway is nitrogen metabolism; urea degradation; CO(2) and NH(3) from urea (urease route): step 1/1. This chain is Urease subunit beta, found in Staphylococcus aureus (strain USA300).